We begin with the raw amino-acid sequence, 642 residues long: A-kinase anchor protein 8-like (642 aa).

The tract at residues 1-269 (MSYTGFVQGS…MRRTWKTWTT (269 aa)) is sufficient for activation of CTE-mediated expression. Residue Arg209 is modified to Asymmetric dimethylarginine; alternate. Arg209 bears the Omega-N-methylarginine; alternate mark. Omega-N-methylarginine occurs at positions 218, 238, and 248. Lys258 is modified (N6-acetyllysine). The tract at residues 265-382 (KTWTTADFRT…QDKQKKRQRD (118 aa)) is disordered. At Thr268 the chain carries Phosphothreonine. The short motif at 275-280 (KKKKRK) is the Nuclear localization signal element. A Nuclear export signal (NES) motif is present at residues 281–297 (QGGSPDEPDSKATRTDC). Phosphoserine is present on Ser284. A compositionally biased stretch (basic and acidic residues) spans 288–297 (PDSKATRTDC). The residue at position 293 (Thr293) is a Phosphothreonine. Ser298 carries the phosphoserine modification. Over residues 299–315 (DNSDSDNDEGTEGEAAE) the composition is skewed to acidic residues. Residues 338-350 (EDGREEGKEDPEK) show a composition bias toward basic and acidic residues. Positions 363–365 (KRK) match the Nuclear localization signal motif. C2H2 AKAP95-type zinc fingers lie at residues 392–414 (CSLC…SKFH) and 485–508 (CAAC…TMDH). The disordered stretch occupies residues 546-642 (GENPFTDNPE…EDDEEGGGGP (97 aa)). The segment covering 553-564 (NPEEEKEQDEVE) has biased composition (acidic residues). Positions 585–605 (AQPPVPLEPAPGTTTPPPPPP) are enriched in pro residues. Positions 631–642 (DMEDDEEGGGGP) are enriched in acidic residues.

This sequence belongs to the AKAP95 family. In terms of assembly, interacts (via N-terminus) with DHX9 (via RGG region). Interacts with TMPO isoform Beta, PRPF40A, RNF43, lamin-B. Interacts with HDAC3; increased during mitosis. Post-translationally, phosphorylated on serine or threonine residues possibly by PKA.

It localises to the nucleus. Its subcellular location is the nucleus matrix. The protein localises to the nucleus speckle. It is found in the PML body. The protein resides in the cytoplasm. Functionally, could play a role in constitutive transport element (CTE)-mediated gene expression by association with DHX9. Increases CTE-dependent nuclear unspliced mRNA export. Proposed to target PRKACA to the nucleus but does not seem to be implicated in the binding of regulatory subunit II of PKA. May be involved in nuclear envelope breakdown and chromatin condensation. May be involved in anchoring nuclear membranes to chromatin in interphase and in releasing membranes from chromating at mitosis. May regulate the initiation phase of DNA replication when associated with TMPO isoform Beta. Required for cell cycle G2/M transition and histone deacetylation during mitosis. In mitotic cells recruits HDAC3 to the vicinity of chromatin leading to deacetylation and subsequent phosphorylation at 'Ser-10' of histone H3; in this function seems to act redundantly with AKAP8. May be involved in regulation of pre-mRNA splicing. This is A-kinase anchor protein 8-like (Akap8l) from Mus musculus (Mouse).